A 749-amino-acid polypeptide reads, in one-letter code: Chaperone protein DnaK 1 (749 aa).

Threonine 198 bears the Phosphothreonine; by autocatalysis mark. Basic and acidic residues-rich tracts occupy residues 643–653, 661–694, and 711–724; these read RWDADPWDRSR, YDDR…RDRN, and PTWE…RDRS. The interval 643 to 749 is disordered; that stretch reads RWDADPWDRS…GWDDDDDEWF (107 aa). Over residues 740–749 the composition is skewed to acidic residues; that stretch reads GWDDDDDEWF.

Belongs to the heat shock protein 70 family.

Acts as a chaperone. The protein is Chaperone protein DnaK 1 of Synechococcus sp. (strain ATCC 27144 / PCC 6301 / SAUG 1402/1) (Anacystis nidulans).